Here is a 364-residue protein sequence, read N- to C-terminus: Histidinol-phosphate aminotransferase (364 aa).

Lys-226 carries the post-translational modification N6-(pyridoxal phosphate)lysine.

This sequence belongs to the class-II pyridoxal-phosphate-dependent aminotransferase family. Histidinol-phosphate aminotransferase subfamily. Homodimer. Requires pyridoxal 5'-phosphate as cofactor.

The catalysed reaction is L-histidinol phosphate + 2-oxoglutarate = 3-(imidazol-4-yl)-2-oxopropyl phosphate + L-glutamate. It participates in amino-acid biosynthesis; L-histidine biosynthesis; L-histidine from 5-phospho-alpha-D-ribose 1-diphosphate: step 7/9. This is Histidinol-phosphate aminotransferase from Campylobacter jejuni subsp. doylei (strain ATCC BAA-1458 / RM4099 / 269.97).